Reading from the N-terminus, the 351-residue chain is SH3 domain-containing protein 3 (351 aa).

Coiled coils occupy residues 1–21 (MDAF…QQLA) and 193–213 (LQLA…LGKE). Positions 31-267 (YESSDVMVID…MVTEKQHKES (237 aa)) constitute a BAR domain. The SH3 domain maps to 281–340 (TSYFLAEVIHPFSAASEKELDLDKGDYIVVRKVSQTGWAEGECKGKAGWFPMAYIEKRQR).

Interacts with FREE1. Interacts (via SH3 domain) with DRP2A/ADL6. Binds to SH3P2. In terms of tissue distribution, detected in all tissues except seedlings.

It localises to the cytoplasmic vesicle. The protein localises to the clathrin-coated vesicle. May be involved in the recruitment of DRP2A to the accessory protein complex and in the negative regulation of its GTPase activity. This chain is SH3 domain-containing protein 3, found in Arabidopsis thaliana (Mouse-ear cress).